Reading from the N-terminus, the 488-residue chain is Probable glycine dehydrogenase (decarboxylating) subunit 2 (488 aa).

Lys274 bears the N6-(pyridoxal phosphate)lysine mark.

The protein belongs to the GcvP family. C-terminal subunit subfamily. The glycine cleavage system is composed of four proteins: P, T, L and H. In this organism, the P 'protein' is a heterodimer of two subunits. It depends on pyridoxal 5'-phosphate as a cofactor.

It catalyses the reaction N(6)-[(R)-lipoyl]-L-lysyl-[glycine-cleavage complex H protein] + glycine + H(+) = N(6)-[(R)-S(8)-aminomethyldihydrolipoyl]-L-lysyl-[glycine-cleavage complex H protein] + CO2. Its function is as follows. The glycine cleavage system catalyzes the degradation of glycine. The P protein binds the alpha-amino group of glycine through its pyridoxal phosphate cofactor; CO(2) is released and the remaining methylamine moiety is then transferred to the lipoamide cofactor of the H protein. This is Probable glycine dehydrogenase (decarboxylating) subunit 2 from Listeria innocua serovar 6a (strain ATCC BAA-680 / CLIP 11262).